A 179-amino-acid polypeptide reads, in one-letter code: Inner membrane-spanning protein YciB (179 aa).

Helical transmembrane passes span 22-42 (IYAATSALIVATAIVLIYSWV), 50-70 (MALITFVLVAVFGGLTLFFHN), 76-96 (WKVTVIYALFAGALLISQWVM), 121-141 (LAWALFFIVCGLANIYIAFWL), and 149-169 (FKVFGLTALTLIFTLLSGVYI).

Belongs to the YciB family.

The protein resides in the cell inner membrane. Functionally, plays a role in cell envelope biogenesis, maintenance of cell envelope integrity and membrane homeostasis. The chain is Inner membrane-spanning protein YciB from Salmonella dublin (strain CT_02021853).